We begin with the raw amino-acid sequence, 267 residues long: Probable proteasome subunit beta type-2 (267 aa).

Positions M1 to G35 are cleaved as a propeptide — removed in mature form. Catalysis depends on T36, which acts as the Nucleophile.

The protein belongs to the peptidase T1B family. As to quaternary structure, the 26S proteasome consists of a 20S proteasome core and two 19S regulatory subunits. The 20S proteasome core is composed of 28 subunits that are arranged in four stacked rings, resulting in a barrel-shaped structure. The two end rings are each formed by seven alpha subunits, and the two central rings are each formed by seven beta subunits. The catalytic chamber with the active sites is on the inside of the barrel.

The protein localises to the cytoplasm. It is found in the nucleus. The enzyme catalyses Cleavage of peptide bonds with very broad specificity.. The proteasome is a multicatalytic proteinase complex which is characterized by its ability to cleave peptides with Arg, Phe, Tyr, Leu, and Glu adjacent to the leaving group at neutral or slightly basic pH. The proteasome has an ATP-dependent proteolytic activity (Potential). This chain is Probable proteasome subunit beta type-2 (pup1), found in Schizosaccharomyces pombe (strain 972 / ATCC 24843) (Fission yeast).